A 164-amino-acid chain; its full sequence is Crossover junction endodeoxyribonuclease RuvC (164 aa).

Residues aspartate 7, glutamate 67, and aspartate 140 contribute to the active site. Residues aspartate 7, glutamate 67, and aspartate 140 each contribute to the Mg(2+) site.

It belongs to the RuvC family. In terms of assembly, homodimer which binds Holliday junction (HJ) DNA. The HJ becomes 2-fold symmetrical on binding to RuvC with unstacked arms; it has a different conformation from HJ DNA in complex with RuvA. In the full resolvosome a probable DNA-RuvA(4)-RuvB(12)-RuvC(2) complex forms which resolves the HJ. Mg(2+) is required as a cofactor.

The protein localises to the cytoplasm. It carries out the reaction Endonucleolytic cleavage at a junction such as a reciprocal single-stranded crossover between two homologous DNA duplexes (Holliday junction).. Its function is as follows. The RuvA-RuvB-RuvC complex processes Holliday junction (HJ) DNA during genetic recombination and DNA repair. Endonuclease that resolves HJ intermediates. Cleaves cruciform DNA by making single-stranded nicks across the HJ at symmetrical positions within the homologous arms, yielding a 5'-phosphate and a 3'-hydroxyl group; requires a central core of homology in the junction. The consensus cleavage sequence is 5'-(A/T)TT(C/G)-3'. Cleavage occurs on the 3'-side of the TT dinucleotide at the point of strand exchange. HJ branch migration catalyzed by RuvA-RuvB allows RuvC to scan DNA until it finds its consensus sequence, where it cleaves and resolves the cruciform DNA. The chain is Crossover junction endodeoxyribonuclease RuvC from Alkaliphilus oremlandii (strain OhILAs) (Clostridium oremlandii (strain OhILAs)).